The following is a 444-amino-acid chain: Protein Z-dependent protease inhibitor (444 aa).

The first 21 residues, 1-21, serve as a signal peptide directing secretion; that stretch reads MKVVPSLLLSVLLAQVWLVPG. The interval 24 to 65 is disordered; sequence PSPQSPETPAPQNQTSRVVQAPKEEEEDEQEASEEKASEEEK. Residue asparagine 36 is glycosylated (N-linked (GlcNAc...) asparagine). A Phosphoserine; by FAM20C modification is found at serine 56. The span at 56–65 shows a compositional bias: basic and acidic residues; sequence SEEKASEEEK. A heparin-binding region spans residues 136–153; sequence TKPGLLPSLFKGLRETLS. Residues asparagine 180, asparagine 197, and asparagine 295 are each glycosylated (N-linked (GlcNAc...) asparagine).

The protein belongs to the serpin family. In terms of assembly, interacts with PROZ. Post-translationally, phosphorylated by FAM20C in the extracellular medium. Expressed by the liver and secreted in plasma.

It localises to the secreted. Inhibits activity of the coagulation protease factor Xa in the presence of PROZ, calcium and phospholipids. Also inhibits factor XIa in the absence of cofactors. In Homo sapiens (Human), this protein is Protein Z-dependent protease inhibitor (SERPINA10).